The chain runs to 191 residues: Protein GrpE (191 aa).

The span at 1-13 (MSEKKNKKEKLAE) shows a compositional bias: basic and acidic residues. The segment at 1 to 40 (MSEKKNKKEKLAEEIEQEELNSLDESVETVEEEATEETLT) is disordered. The segment covering 14–40 (EIEQEELNSLDESVETVEEEATEETLT) has biased composition (acidic residues).

Belongs to the GrpE family. In terms of assembly, homodimer.

It localises to the cytoplasm. Functionally, participates actively in the response to hyperosmotic and heat shock by preventing the aggregation of stress-denatured proteins, in association with DnaK and GrpE. It is the nucleotide exchange factor for DnaK and may function as a thermosensor. Unfolded proteins bind initially to DnaJ; upon interaction with the DnaJ-bound protein, DnaK hydrolyzes its bound ATP, resulting in the formation of a stable complex. GrpE releases ADP from DnaK; ATP binding to DnaK triggers the release of the substrate protein, thus completing the reaction cycle. Several rounds of ATP-dependent interactions between DnaJ, DnaK and GrpE are required for fully efficient folding. This chain is Protein GrpE, found in Listeria innocua serovar 6a (strain ATCC BAA-680 / CLIP 11262).